A 608-amino-acid chain; its full sequence is UvrABC system protein C (608 aa).

In terms of domain architecture, GIY-YIG spans 22–100; sequence EKPGIYQYLN…IKKYKPRYNV (79 aa). Residues 214–249 form the UVR domain; it reads QEISRLLYQRMQDLAAEMKFEEAQKVKEKYALIENY.

This sequence belongs to the UvrC family. Interacts with UvrB in an incision complex.

It is found in the cytoplasm. Functionally, the UvrABC repair system catalyzes the recognition and processing of DNA lesions. UvrC both incises the 5' and 3' sides of the lesion. The N-terminal half is responsible for the 3' incision and the C-terminal half is responsible for the 5' incision. The polypeptide is UvrABC system protein C (Bacteroides fragilis (strain ATCC 25285 / DSM 2151 / CCUG 4856 / JCM 11019 / LMG 10263 / NCTC 9343 / Onslow / VPI 2553 / EN-2)).